The primary structure comprises 300 residues: Acetylglutamate kinase (300 aa).

Substrate is bound by residues 73 to 74 (GG), Arg95, and Asn197.

This sequence belongs to the acetylglutamate kinase family. ArgB subfamily.

It localises to the cytoplasm. The enzyme catalyses N-acetyl-L-glutamate + ATP = N-acetyl-L-glutamyl 5-phosphate + ADP. It participates in amino-acid biosynthesis; L-arginine biosynthesis; N(2)-acetyl-L-ornithine from L-glutamate: step 2/4. In terms of biological role, catalyzes the ATP-dependent phosphorylation of N-acetyl-L-glutamate. The polypeptide is Acetylglutamate kinase (Bordetella bronchiseptica (strain ATCC BAA-588 / NCTC 13252 / RB50) (Alcaligenes bronchisepticus)).